The sequence spans 856 residues: 3-hydroxy-3-methylglutaryl-coenzyme A reductase (856 aa).

4 consecutive transmembrane segments (helical) span residues 12–32 (FCAS…VCML), 89–109 (ILGI…SSVI), 123–143 (LFFF…QFAL), and 190–210 (VLCC…MTFY). The N-linked (GlcNAc...) asparagine glycan is linked to N326. The chain crosses the membrane as a helical span at residues 344–364 (SADHIVILILLLALAVKFVFF). Positions 365-443 (ETRDELTTTR…CEVMALVTSG (79 aa)) are linker. N-linked (GlcNAc...) asparagine glycosylation is present at N412. The tract at residues 443–771 (GHIAGYQLEK…SCTMPSIEIG (329 aa)) is catalytic. Active-site charge relay system residues include E528 and K659. A glycan (N-linked (GlcNAc...) asparagine) is linked at N700. Catalysis depends on D735, which acts as the Charge relay system. The active-site Proton donor is H834. The tract at residues 836–856 (RHNRSSVSTSGSEPSTPACKS) is disordered. A glycan (N-linked (GlcNAc...) asparagine) is linked at N838. Over residues 840 to 856 (SSVSTSGSEPSTPACKS) the composition is skewed to low complexity.

Belongs to the HMG-CoA reductase family.

The protein localises to the endoplasmic reticulum membrane. It carries out the reaction (R)-mevalonate + 2 NADP(+) + CoA = (3S)-3-hydroxy-3-methylglutaryl-CoA + 2 NADPH + 2 H(+). It functions in the pathway metabolic intermediate biosynthesis; (R)-mevalonate biosynthesis; (R)-mevalonate from acetyl-CoA: step 3/3. With respect to regulation, the activity of HMG-CoA-reductase is suppressed by exogenous mevalonate. Functionally, synthesis of mevalonate for the production of non-sterol isoprenoids, which are essential for growth differentiation. The sequence is that of 3-hydroxy-3-methylglutaryl-coenzyme A reductase from Blattella germanica (German cockroach).